Reading from the N-terminus, the 512-residue chain is Histidine ammonia-lyase (512 aa).

Positions Ala-145–Gly-147 form a cross-link, 5-imidazolinone (Ala-Gly). Ser-146 bears the 2,3-didehydroalanine (Ser) mark.

The protein belongs to the PAL/histidase family. Contains an active site 4-methylidene-imidazol-5-one (MIO), which is formed autocatalytically by cyclization and dehydration of residues Ala-Ser-Gly.

It is found in the cytoplasm. It carries out the reaction L-histidine = trans-urocanate + NH4(+). It participates in amino-acid degradation; L-histidine degradation into L-glutamate; N-formimidoyl-L-glutamate from L-histidine: step 1/3. This is Histidine ammonia-lyase from Pseudomonas fluorescens (strain SBW25).